The primary structure comprises 218 residues: Cell division protein SepF (218 aa).

The segment at 25 to 115 (DVAASTDNVI…IANRREQYQQ (91 aa)) is disordered. Residues 29–43 (STDNVIPRSQQSVRA) show a composition bias toward polar residues. Positions 47–63 (PKQEPRNNHVQQDHQAR) are enriched in basic and acidic residues.

The protein belongs to the SepF family. In terms of assembly, homodimer. Interacts with FtsZ.

The protein localises to the cytoplasm. Its function is as follows. Cell division protein that is part of the divisome complex and is recruited early to the Z-ring. Probably stimulates Z-ring formation, perhaps through the cross-linking of FtsZ protofilaments. Its function overlaps with FtsA. The chain is Cell division protein SepF from Streptococcus pyogenes serotype M12 (strain MGAS2096).